A 471-amino-acid polypeptide reads, in one-letter code: Probable multidrug-efflux transporter MT1670 (471 aa).

14 consecutive transmembrane segments (helical) span residues 23-43 (IVLA…ISLL), 55-75 (LYAW…TTVN), 91-111 (LAVF…QILV), 116-136 (LQGI…NSTL), 146-166 (ALVS…GGLF), 174-194 (WAFG…PVAL), 213-233 (VPVW…VAAL), 237-257 (LVQT…FVVV), 279-299 (IYLT…VPLF), 308-328 (PVAA…GEVA), 337-357 (VIGH…ALGA), 366-386 (VGII…IGIA), 410-430 (AINV…GVVV), and 438-458 (VAAA…GVIA).

The protein belongs to the major facilitator superfamily.

It localises to the cell membrane. In terms of biological role, could be involved in fluoroquinolones efflux. This Mycobacterium tuberculosis (strain CDC 1551 / Oshkosh) protein is Probable multidrug-efflux transporter MT1670.